The following is a 250-amino-acid chain: Probable replication-associated protein repA2 (250 aa).

It belongs to the IncFII RepA family.

Its function is as follows. This protein is essential for plasmid replication; it is involved in copy control functions. The chain is Probable replication-associated protein repA2 (repA2) from Buchnera aphidicola subsp. Acyrthosiphon pisum (strain APS) (Acyrthosiphon pisum symbiotic bacterium).